Here is a 207-residue protein sequence, read N- to C-terminus: High frequency lysogenization protein HflD homolog (207 aa).

Belongs to the HflD family.

It localises to the cytoplasm. The protein localises to the cell inner membrane. This Pseudomonas fluorescens (strain ATCC BAA-477 / NRRL B-23932 / Pf-5) protein is High frequency lysogenization protein HflD homolog.